We begin with the raw amino-acid sequence, 347 residues long: Inositol 2-dehydrogenase (347 aa).

It belongs to the Gfo/Idh/MocA family. In terms of assembly, homotetramer.

It carries out the reaction myo-inositol + NAD(+) = scyllo-inosose + NADH + H(+). Involved in the oxidation of myo-inositol (MI) to 2-keto-myo-inositol (2KMI or 2-inosose). In Rubrobacter xylanophilus (strain DSM 9941 / JCM 11954 / NBRC 16129 / PRD-1), this protein is Inositol 2-dehydrogenase.